Here is an 84-residue protein sequence, read N- to C-terminus: Toxin To5 (84 aa).

The signal sequence occupies residues 1–19 (MKAIIFFIGCLMLIDLVAG). Residues 21–82 (RSGYPVTQKG…IWGSYPNNCG (62 aa)) enclose the LCN-type CS-alpha/beta domain. Cystine bridges form between C31/C81, C35/C57, C43/C62, and C47/C64. C81 is subject to Cysteine amide.

Expressed by the venom gland.

The protein resides in the secreted. In terms of biological role, beta toxins bind voltage-independently at site-4 of sodium channels (Nav) and shift the voltage of activation toward more negative potentials thereby affecting sodium channel activation and promoting spontaneous and repetitive firing. The polypeptide is Toxin To5 (Tityus obscurus (Amazonian scorpion)).